A 159-amino-acid polypeptide reads, in one-letter code: MAIEGVMKEGFVTTTYDSVVNWAKTGSLWPMTFGLACCAVEMMHAGAARYDIDRFGMLFRPSPRQSDLMIVAGTLCNKMAPALRKVYDQMPEPRWVLSMGSCANGGGYYHYSYSVVRGCDRIVPVDVYVPGCPPTAEALLYGVIQLQQKIRRTNTIARA.

Cysteine 37, cysteine 38, cysteine 102, and cysteine 132 together coordinate [4Fe-4S] cluster.

The protein belongs to the complex I 20 kDa subunit family. In terms of assembly, NDH-1 is composed of 14 different subunits. Subunits NuoB, C, D, E, F, and G constitute the peripheral sector of the complex. The cofactor is [4Fe-4S] cluster.

It is found in the cell inner membrane. The enzyme catalyses a quinone + NADH + 5 H(+)(in) = a quinol + NAD(+) + 4 H(+)(out). In terms of biological role, NDH-1 shuttles electrons from NADH, via FMN and iron-sulfur (Fe-S) centers, to quinones in the respiratory chain. The immediate electron acceptor for the enzyme in this species is believed to be ubiquinone. Couples the redox reaction to proton translocation (for every two electrons transferred, four hydrogen ions are translocated across the cytoplasmic membrane), and thus conserves the redox energy in a proton gradient. The sequence is that of NADH-quinone oxidoreductase subunit B from Variovorax paradoxus (strain S110).